A 128-amino-acid polypeptide reads, in one-letter code: Large ribosomal subunit protein bL21 (128 aa).

The segment at 104 to 128 is disordered; it reads GKTPTVGPRPKKEKVVEPAEGEGDH. A compositionally biased stretch (basic and acidic residues) spans 116-128; sequence EKVVEPAEGEGDH.

It belongs to the bacterial ribosomal protein bL21 family. In terms of assembly, part of the 50S ribosomal subunit. Contacts protein L20.

Its function is as follows. This protein binds to 23S rRNA in the presence of protein L20. This chain is Large ribosomal subunit protein bL21, found in Nitrobacter hamburgensis (strain DSM 10229 / NCIMB 13809 / X14).